Here is a 141-residue protein sequence, read N- to C-terminus: Large ribosomal subunit protein uL16c (141 aa).

Residues 1–17 (MLSPKRTKYRKPHRGNR) are compositionally biased toward basic residues. Residues 1–21 (MLSPKRTKYRKPHRGNRKGQA) form a disordered region.

Belongs to the universal ribosomal protein uL16 family. In terms of assembly, part of the 50S ribosomal subunit.

It localises to the plastid. The protein resides in the chloroplast. This chain is Large ribosomal subunit protein uL16c, found in Ostreococcus tauri.